Consider the following 38-residue polypeptide: Large ribosomal subunit protein bL36 (38 aa).

The protein belongs to the bacterial ribosomal protein bL36 family.

The chain is Large ribosomal subunit protein bL36 from Buchnera aphidicola subsp. Acyrthosiphon pisum (strain 5A).